Here is a 255-residue protein sequence, read N- to C-terminus: Adenosylcobinamide-GDP ribazoletransferase (255 aa).

Helical transmembrane passes span 33 to 53, 57 to 77, 107 to 127, 136 to 156, 174 to 194, 196 to 216, and 234 to 254; these read IFLP…IELF, FPGF…SGAL, VGSM…GSYA, FTVL…IYSF, AGLI…AAFF, FSLI…FVVA, and IMEL…NIGV.

The protein belongs to the CobS family. Mg(2+) is required as a cofactor.

The protein resides in the cell membrane. The enzyme catalyses alpha-ribazole + adenosylcob(III)inamide-GDP = adenosylcob(III)alamin + GMP + H(+). It catalyses the reaction alpha-ribazole 5'-phosphate + adenosylcob(III)inamide-GDP = adenosylcob(III)alamin 5'-phosphate + GMP + H(+). It participates in cofactor biosynthesis; adenosylcobalamin biosynthesis; adenosylcobalamin from cob(II)yrinate a,c-diamide: step 7/7. Joins adenosylcobinamide-GDP and alpha-ribazole to generate adenosylcobalamin (Ado-cobalamin). Also synthesizes adenosylcobalamin 5'-phosphate from adenosylcobinamide-GDP and alpha-ribazole 5'-phosphate. In Carboxydothermus hydrogenoformans (strain ATCC BAA-161 / DSM 6008 / Z-2901), this protein is Adenosylcobinamide-GDP ribazoletransferase.